The primary structure comprises 432 residues: Histidine--tRNA ligase (432 aa).

It belongs to the class-II aminoacyl-tRNA synthetase family. In terms of assembly, homodimer.

The protein localises to the cytoplasm. It carries out the reaction tRNA(His) + L-histidine + ATP = L-histidyl-tRNA(His) + AMP + diphosphate + H(+). In Ralstonia nicotianae (strain ATCC BAA-1114 / GMI1000) (Ralstonia solanacearum), this protein is Histidine--tRNA ligase.